The following is a 170-amino-acid chain: 3-hydroxyacyl-[acyl-carrier-protein] dehydratase FabZ (170 aa).

The active site involves H66.

The protein belongs to the thioester dehydratase family. FabZ subfamily.

The protein resides in the cytoplasm. It carries out the reaction a (3R)-hydroxyacyl-[ACP] = a (2E)-enoyl-[ACP] + H2O. Its function is as follows. Involved in unsaturated fatty acids biosynthesis. Catalyzes the dehydration of short chain beta-hydroxyacyl-ACPs and long chain saturated and unsaturated beta-hydroxyacyl-ACPs. In Granulibacter bethesdensis (strain ATCC BAA-1260 / CGDNIH1), this protein is 3-hydroxyacyl-[acyl-carrier-protein] dehydratase FabZ.